The following is a 65-amino-acid chain: Ringhalexin (65 aa).

4 disulfide bridges follow: cysteine 3-cysteine 24, cysteine 17-cysteine 42, cysteine 46-cysteine 57, and cysteine 58-cysteine 63.

Expressed by the venom gland.

The protein resides in the secreted. Its function is as follows. Has anticoagulant activity, since it is able to inhibit the activation of coagulation factor X (F10) by coagulation factor VIIa (F7) (IC(50)=123.8 nM). Also shows weak irreversible neurotoxicity. The chain is Ringhalexin from Hemachatus haemachatus (Rinkhals).